A 368-amino-acid chain; its full sequence is Phosphotransferase IIC component GlvC (368 aa).

Residues 1–11 (MLSQIQRFGGA) lie on the Periplasmic side of the membrane. In terms of domain architecture, PTS EIIC type-1 spans 1 to 368 (MLSQIQRFGG…VGNMGGGLID (368 aa)). A helical membrane pass occupies residues 12-32 (MFTPVLLFPFAGIVVGLAILL). Over 33–59 (QNPMFVGESLTDPNSLFAQIVHIIEEG) the chain is Cytoplasmic. The helical transmembrane segment at 60 to 80 (GWTVFRNMPLIFAVGLPIGLA) threads the bilayer. The Periplasmic segment spans residues 81–86 (KQAQGR). A helical membrane pass occupies residues 87 to 107 (ACLAVMVSFLTWNYFINAMGM). Topologically, residues 108 to 129 (TWGSYFGVDFTQDAVAGSGLTM) are cytoplasmic. A helical transmembrane segment spans residues 130-150 (MAGIKTLDTSIIGAIIISGIV). Topologically, residues 151-173 (TALHNRLFDKKLPVFLGIFQGTS) are periplasmic. The chain crosses the membrane as a helical span at residues 174-194 (YVVIIAFLVMIPCAWLTLLGW). The Cytoplasmic portion of the chain corresponds to 195–198 (PKVQ). Residues 199 to 221 (MGIESLQAFLRSAGALGVWVYTF) traverse the membrane as a helical segment. Over 222 to 224 (LER) the chain is Periplasmic. Residues 225–245 (ILIPTGLHHFIYGQFIFGPAA) traverse the membrane as a helical segment. At 246 to 276 (VEGGIQMYWAQHLQEFSLSAEPLKSLFPEGG) the chain is on the cytoplasmic side. Residues 277–297 (FALHGNSKIFGAVGISLAMYF) traverse the membrane as a helical segment. The Periplasmic portion of the chain corresponds to 298–306 (TAAPENRVK). The helical transmembrane segment at 307-327 (VAGLLIPATLTAMLVGITEPL) threads the bilayer. Residue Glu-328 is a topological domain, cytoplasmic. Residues 329–349 (FTFLFISPLLFAVHAVLAASM) form a helical membrane-spanning segment. Residues 350 to 368 (STVMYLFGVVGNMGGGLID) are Periplasmic-facing.

The protein localises to the cell inner membrane. Functionally, the phosphoenolpyruvate-dependent sugar phosphotransferase system (PTS), a major carbohydrate active -transport system, catalyzes the phosphorylation of incoming sugar substrates concomitant with their translocation across the cell membrane. This operon may be cryptic in wild-type K12 strains. The polypeptide is Phosphotransferase IIC component GlvC (Escherichia coli (strain K12)).